A 196-amino-acid chain; its full sequence is Putative NADH dehydrogenase/NAD(P)H nitroreductase PST_3601 (196 aa).

This sequence belongs to the nitroreductase family. HadB/RutE subfamily. The cofactor is FMN.

The polypeptide is Putative NADH dehydrogenase/NAD(P)H nitroreductase PST_3601 (Stutzerimonas stutzeri (strain A1501) (Pseudomonas stutzeri)).